We begin with the raw amino-acid sequence, 31 residues long: Cytochrome b6-f complex subunit 6 (31 aa).

The chain crosses the membrane as a helical span at residues 4-24 (ITSYFGFLLAALTITSALLIG).

It belongs to the PetL family. The 4 large subunits of the cytochrome b6-f complex are cytochrome b6, subunit IV (17 kDa polypeptide, PetD), cytochrome f and the Rieske protein, while the 4 small subunits are PetG, PetL, PetM and PetN. The complex functions as a dimer.

The protein resides in the plastid. It localises to the chloroplast thylakoid membrane. Its function is as follows. Component of the cytochrome b6-f complex, which mediates electron transfer between photosystem II (PSII) and photosystem I (PSI), cyclic electron flow around PSI, and state transitions. PetL is important for photoautotrophic growth as well as for electron transfer efficiency and stability of the cytochrome b6-f complex. The sequence is that of Cytochrome b6-f complex subunit 6 from Magnolia grandiflora (Southern magnolia).